A 681-amino-acid polypeptide reads, in one-letter code: MNDTDLSTFTGRSLLIDQLSSVTQGTPVLDFIDKLRIHFYTTIRQNLLKIDLKNICSLHDLTDQLSDFWLVYEQSVLESPILSPELDRILTCFRCLCRRYLPISVIESVLTEYLDQVLKVWLESKTNPCLDMEKFFQLCEKFKQLGLSSVLKERFVYVLQLHVGSLLTTRYAMSWEQSVYHEALEWIRTEFGVLVEHVFSLSNPAVLVQLDHLVSQILAHLRSDNILDIVLHYPNSLGAIEDLRLVARQKQQRQYLTETFVKDCTSSILTASSDSSYILLFYVSTIRCFVALDPPGVLLDKAAKPIRSFLNEREDAYKCLVSLLFVDGEKGLRSELSQIPTENIDSTTDRFDNYHWMPDPIDAAPDFKKPTDRDVVGSLISIFKSKEPLVKELQLLLADRLLQLTDYHYEVEAKNIEFLKYRFGETVLQMCSVMLNDIENSRFIDQSIHMENYVSKGLHVTILSRLFWPTLSVRYFHLPGPLKKELDAYAEEYRERKRKRELVFLPNLGSVELEIELEDRTLTLTVTPEQAAFISLFEETSTLHIEKAAELLDQPKEIVERHLKFWLHHRVLTDIGDDRYRVRETEAETATETVLDEIQGVSAVQSEAESSAAEMRVYWSFVVGMLTNLGALELERIHNMLTMFIPPPNGYTRTQSELREFLALMIKEEKLEFTGGAYKLK.

This sequence belongs to the cullin family. In terms of assembly, the APC/C is composed of at least 13 subunits: apc1, apc2, nuc2, apc4, apc5, cut9, apc8, apc10, apc11, hcn1, apc13, apc14 and apc15.

Component of the anaphase-promoting complex/cyclosome (APC/C), a cell cycle-regulated E3 ubiquitin-protein ligase complex that controls progression through mitosis and the G1 phase of the cell cycle. The APC/C is thought to confer substrate specificity and, in the presence of ubiquitin-conjugating E2 enzymes, it catalyzes the formation of protein-ubiquitin conjugates that are subsequently degraded by the 26S proteasome. This is Anaphase-promoting complex subunit 2 (apc2) from Schizosaccharomyces pombe (strain 972 / ATCC 24843) (Fission yeast).